The chain runs to 257 residues: Isoprenyl transferase (257 aa).

The active site involves Asp33. Mg(2+) is bound at residue Asp33. Substrate is bound by residues 34–37 (GNGR), Trp38, Arg46, His50, and 78–80 (STE). Asn81 acts as the Proton acceptor in catalysis. Residues Trp82, Arg84, Arg204, and 210–212 (RLS) contribute to the substrate site. Position 223 (Glu223) interacts with Mg(2+).

This sequence belongs to the UPP synthase family. Homodimer. It depends on Mg(2+) as a cofactor.

Its function is as follows. Catalyzes the condensation of isopentenyl diphosphate (IPP) with allylic pyrophosphates generating different type of terpenoids. The chain is Isoprenyl transferase from Clostridium acetobutylicum (strain ATCC 824 / DSM 792 / JCM 1419 / IAM 19013 / LMG 5710 / NBRC 13948 / NRRL B-527 / VKM B-1787 / 2291 / W).